Here is a 2201-residue protein sequence, read N- to C-terminus: MALPRLTGALRSFSNVTKQDNYNEEVADLQMKRSKLHEQIVGLDLTWMKIVKFLNEKLEKSEMQRVNEDLKAILQAAKQIVGTDNGKEAIESAAAFLFKTFHLKDCVGHQETKAIKQMFGPFPSSSATAACDATNRITSHFCKDSLTALVQMTTDENGDRVLFGKNLAFSFDMHDLDHFDELPINGESQKTISLDYKKFLTDHLQDHSTLNRKPAEKTNDSFLWCEVEKYLNATLNEMAEATRIEDLCCTLYDMLASVKSGDELQDELFELLGPDGLELIEKLLQNRVTIVDRFLNSSNDHKLQALQDNCKKILGENAKPNYGCQVTIQSEQEKQLMKQYRREEKRIARREKKAGEDGEATEGLLCFDPKELRIHREQALMNARNVPILSRQRDTDVEKIRYPHVYDSQAEAMRTSAFIAGAKMILPEGIQRENNKIYEEVKIPYTEPMPIGFEEKPVYIQDLDEIGQLAFKGMRRLNRIQSIVFETAYNTNENMLICAPTGAGKTNIAMLTVLHEIRQHFQQGVIKKNEFKIVYVAPMKALAAEMTNYFSKRLEPLGIVVKELTGDMQLSKNEILRTQMLVTTPEKWDVVTRKSVGDVALSQIVKLLILDEVHLLHEDRGPVLESIVARTLRQVESTQSMIRILGLSATLPNYLDVATFLHVNPCIGLFFFDGRFRPVPLGQTFLGIKSANKVQQLNNMDEVCYESVLKQVKAGHQVMVFVHARNATVRTAMSLIERAKNNGQICYFLPTQGPEYGHAEKQVQKSRNRQVRELFPDGFSIHHAGMLRQDRNLVESLFSNGHIKVLVCTATLAWGVNLPAHAVIIKGTQIYAAKRGSFVDLGILDVMQIFGRAGRPQFDKFGEGIIITTHDKLSHYLSLLTQQNPIESQFLESLADNLNAEIALGTVTNVEEAVKWISYTYLYVRMRANPLVYGISHKAYQIDPTLAKHREQLVIEVGRKLDKARMIRFEERTGYFSSTDLGRTASHYYIKYNTIETFNELFDAHKTESDIFAIVSKAEEFDQIKVREEEIEELDTLLSNFCELSAPGGVENSYGKINILLQTYISRGEVDSFSLISDSAYVAQNAARIVRALFEIALRKRWPAMTYRLLNLSKVIDKRLWGWTSPLRQFSVLPPHILTRLEEKNLTVDKLKDMRKDEIGHILHHVNIGLKVKQCVHQIPSVTMEASIQPITRTVLRVTLSISPDFSWNDQVHGTVGEPWWIWVEDPTNDHIYHSEYFLVLKKQVISKEAQLLVFTIPIFEPLPSQYYIRAVSDRWLGAEAVCIINFQHLILPERHPPHTELLDLQPLPVTALGCEAYEALYNFSHFNPVQTQIFHTLYHTDCNVLLGAPTGSGKTVAAELAIFRVFNKYPTSKAVYIAPLKALVRERMDDWKVRIEEKLGKKVIELTGDVTPDMKSIAKADLIVTTPEKWDGVSRSWQNRNYVKQVTILIIDEIHLLGEERGPVLEVIVSRTNFISSHTEKPVRIVGLSTALANARDLADWLNIRQMGLFNFRPSVRPVPLEVHIQGFPGQHYCPRMASMNKPTFQAIRSHSPAKPVLIFVSSRRQTRLTALELIAFLATEEDPKQWLNMDEREMENIIGTIRDSNLKLTLAFGIGMHHAGLHERDRKTVEELFVNCKIQVLIATSTLAWGVNFPAHLVIIKGTEYYDGKTRRYVDFPITDVLQMMGRAGRPQFDDQGKAVILVHDIKKDFYKKFLYEPFPVESSLLGVLSDHLNAEIAGGTITSKQDAMDYITWTYFFRRLIMNPSYYNLSDVSHDSVNKFLSNLVEKSLVELEHSYCIEIGEDNRSIEPLTYGRIASYYYLKHQTVKMFKERLKPECGTEELLSILSDAEEYTDLPVRHNEDHMNSELAKCLPLESNPHSFDSPHTKAHLLLQAHLSRTMLPCPDYDTDTKTVLDQALRVCQAMLDVAAHQGWLVTVLNITSLVQMVIQGRWLKDSSLLTIPHIENHHLHIFRKWSPGMKGPHAGYHGSIECLPELIHACAGKDHVFSSMIEKELPAPKMKQAWNFLSHLPVIDVGLSVKGWWDDAAEGHDEISITTVASDKHSDNRWVRLHADQEYVLQVSLQRVSLGFHKGKQDSHAVTPRFPKSKDEGWFLILGEVDKRELIALKRVGYVRSHHMVSISFYTPEVPGRYIYTLYFMSDCYLGLDQQYDIHLHVTPASISAQADEISDALTDLKVK.

Position 12 is a phosphoserine (Ser12). Coiled coils occupy residues 18–81 (KQDN…KQIV) and 328–356 (IQSE…KAGE). Residues 486–669 (ETAYNTNENM…FLHVNPCIGL (184 aa)) enclose the Helicase ATP-binding 1 domain. 499–506 (APTGAGKT) is a binding site for ATP. Lys572 is subject to N6-acetyllysine. The DEVH box signature appears at 611-614 (DEVH). The 219-residue stretch at 696-914 (QLNNMDEVCY…GTVTNVEEAV (219 aa)) folds into the Helicase C-terminal 1 domain. In terms of domain architecture, SEC63 1 spans 978–1287 (STDLGRTASH…GAEAVCIINF (310 aa)). Residues 1336–1511 (HTLYHTDCNV…WLNIRQMGLF (176 aa)) form the Helicase ATP-binding 2 domain. Residue 1349-1356 (APTGSGKT) participates in ATP binding. A DEIH box motif is present at residues 1453 to 1456 (DEIH). Residues 1544 to 1739 (PTFQAIRSHS…VLSDHLNAEI (196 aa)) enclose the Helicase C-terminal 2 domain. Residues 1812–2176 (PLTYGRIASY…LGLDQQYDIH (365 aa)) form the SEC63 2 domain.

Belongs to the helicase family. As to quaternary structure, identified in the ASCC complex that contains ASCC1, ASCC2 and ASCC3. Functions as a scaffolding subunit that interacts directly with both ASCC1 and ASCC2. Interacts directly with ALKBH3, and thereby recruits ALKBH3 to the ASCC complex. Part of the ASC-1/TRIP4 complex, that contains TRIP4, ASCC1, ASCC2 and ASCC3. Part of the RQT (ribosome quality control trigger) complex, that contains ASCC2, ASCC3 and TRIP4. Associates with ribosomes; recruited to collided ribosomes. Interacts with ZCCHC4. Interacts with ZNF598. Interacts with RPS3.

The protein localises to the nucleus. The protein resides in the nucleus speckle. Its subcellular location is the cytoplasm. It is found in the cytosol. The enzyme catalyses Couples ATP hydrolysis with the unwinding of duplex DNA by translocating in the 3'-5' direction.. The catalysed reaction is ATP + H2O = ADP + phosphate + H(+). ATPase involved both in DNA repair and rescue of stalled ribosomes. 3'-5' DNA helicase involved in repair of alkylated DNA: promotes DNA unwinding to generate single-stranded substrate needed for ALKBH3, enabling ALKBH3 to process alkylated N3-methylcytosine (3mC) within double-stranded regions. Also involved in activation of the ribosome quality control (RQC) pathway, a pathway that degrades nascent peptide chains during problematic translation. Drives the splitting of stalled ribosomes that are ubiquitinated in a ZNF598-dependent manner, as part of the ribosome quality control trigger (RQT) complex. Part of the ASC-1 complex that enhances NF-kappa-B, SRF and AP1 transactivation. The chain is Activating signal cointegrator 1 complex subunit 3 (ascc3) from Bos taurus (Bovine).